The following is a 106-amino-acid chain: MSTAIAQQKIRIRLKAFDRRMLDLSCDKIIETADHTAATAIGPIPLPTKRKIYCVLRSPHVDKDSREHFETRTHRRLIDIFNPSSKTIDALMKLDLPSGVDIEVKL.

The protein belongs to the universal ribosomal protein uS10 family. Part of the 30S ribosomal subunit.

Involved in the binding of tRNA to the ribosomes. The protein is Small ribosomal subunit protein uS10 of Synechococcus sp. (strain RCC307).